The chain runs to 265 residues: Undecaprenyl-diphosphatase 1 (265 aa).

The next 7 helical transmembrane spans lie at 4 to 24 (IIIA…PISS), 42 to 62 (AKTF…ILYH), 84 to 104 (FHVF…HDVI), 108 to 128 (LFQP…MIFA), 184 to 204 (SEFS…LDLL), 217 to 237 (MFAV…VTFL), and 245 to 265 (LKPF…FVLL).

It belongs to the UppP family.

The protein localises to the cell membrane. It catalyses the reaction di-trans,octa-cis-undecaprenyl diphosphate + H2O = di-trans,octa-cis-undecaprenyl phosphate + phosphate + H(+). Catalyzes the dephosphorylation of undecaprenyl diphosphate (UPP). Confers resistance to bacitracin. This chain is Undecaprenyl-diphosphatase 1, found in Bacillus thuringiensis (strain Al Hakam).